Here is a 114-residue protein sequence, read N- to C-terminus: MSESGKTVTRVDLCEAVYQKVGLSRTESAAFVELVLKEITDCLEKGETVKLSSFGSFMVRKKGERIGRNPKTGTEVPISPRRVMVFKPSAILKQRINNGAAAKTNGDVAKVAAG.

This sequence belongs to the bacterial histone-like protein family. Heterodimer of an alpha and a beta chain.

This protein is one of the two subunits of integration host factor, a specific DNA-binding protein that functions in genetic recombination as well as in transcriptional and translational control. This chain is Integration host factor subunit alpha, found in Afipia carboxidovorans (strain ATCC 49405 / DSM 1227 / KCTC 32145 / OM5) (Oligotropha carboxidovorans).